Reading from the N-terminus, the 37-residue chain is Large ribosomal subunit protein bL36c (37 aa).

Belongs to the bacterial ribosomal protein bL36 family.

It localises to the plastid. The protein is Large ribosomal subunit protein bL36c (rpl36) of Epifagus virginiana (Beechdrops).